The primary structure comprises 517 residues: GMP synthase [glutamine-hydrolyzing] (517 aa).

The 192-residue stretch at 11–202 (KIIVLDFGSQ…AFDVCGAKDN (192 aa)) folds into the Glutamine amidotransferase type-1 domain. Cysteine 88 acts as the Nucleophile in catalysis. Residues histidine 176 and glutamate 178 contribute to the active site. The GMPS ATP-PPase domain occupies 203 to 392 (WTMDDFIKLS…LGLPHDLVWR (190 aa)). 230–236 (SGGVDSS) serves as a coordination point for ATP.

As to quaternary structure, homodimer.

The enzyme catalyses XMP + L-glutamine + ATP + H2O = GMP + L-glutamate + AMP + diphosphate + 2 H(+). It functions in the pathway purine metabolism; GMP biosynthesis; GMP from XMP (L-Gln route): step 1/1. Functionally, catalyzes the synthesis of GMP from XMP. This Lactobacillus delbrueckii subsp. bulgaricus (strain ATCC 11842 / DSM 20081 / BCRC 10696 / JCM 1002 / NBRC 13953 / NCIMB 11778 / NCTC 12712 / WDCM 00102 / Lb 14) protein is GMP synthase [glutamine-hydrolyzing].